The following is a 468-amino-acid chain: MSPKTLYDKIWDAHVAHEADDGTTLLYIDRHLVHEVTSPQAFEGLRMTGRTVRAPDKTIAVPDHNVPTTLGREKADNMTEDSRIQVAALDTNAKEFGIHYYPVSDIRQGIVHIVGPEQGWTLPGMTVVCGDSHTATHGAFGALAHGIGTSEVEHVLATQTLIQKKSKNMKVEITGKLRPGVTAKDITLSVIGHTGTAGGTGYVIEYCGEAIRDLSMEGRMTVCNMAIEGGARAGLIAPDEKTFEYCMGRPHAPKGAQWEAAMSWWKTLYSDDDAHWDKVITIKGDDIAPVVTWGTSPEDVLPITASVPKPEDFTGGKVGAVQRSLEYMGLTSGTPLSEVEIDTVFIGSCTNGRIEDLRAAAEILKGKKKKDGLRAMVVPGSGLVRAQAEEEGLADIFKEAGFEWRLAGCSMCLAMNPDQLQPGERCAATSNRNFEGRQGRGGRTHLMSPAMAAAAAITGRLTDVRDLM.

Residues cysteine 349, cysteine 409, and cysteine 412 each contribute to the [4Fe-4S] cluster site.

Belongs to the aconitase/IPM isomerase family. LeuC type 1 subfamily. In terms of assembly, heterodimer of LeuC and LeuD. [4Fe-4S] cluster is required as a cofactor.

The enzyme catalyses (2R,3S)-3-isopropylmalate = (2S)-2-isopropylmalate. It participates in amino-acid biosynthesis; L-leucine biosynthesis; L-leucine from 3-methyl-2-oxobutanoate: step 2/4. Functionally, catalyzes the isomerization between 2-isopropylmalate and 3-isopropylmalate, via the formation of 2-isopropylmaleate. The chain is 3-isopropylmalate dehydratase large subunit from Roseobacter denitrificans (strain ATCC 33942 / OCh 114) (Erythrobacter sp. (strain OCh 114)).